Reading from the N-terminus, the 230-residue chain is Membrane protein (230 aa).

Residues 1–24 (MSSPTTPVPVISWTADEAIKFLKE) are Virion surface-facing. Residues 25-45 (WNFSLGIIVLFITIILQFGYT) traverse the membrane as a helical segment. The Intravirion portion of the chain corresponds to 46–55 (SRSMFVYVIK). A helical transmembrane segment spans residues 56-76 (MVILWLMWPLTIILTIFNCVY). Residues 77–84 (ALNNVYLG) lie on the Virion surface side of the membrane. Residues 85–105 (FSIVFTIVAIIMWVVYFVNSI) form a helical membrane-spanning segment. Over 106-228 (RLFIRTGSWW…SGMDTALLRN (123 aa)) the chain is Intravirion.

Belongs to the betacoronaviruses M protein family. As to quaternary structure, homomultimer. Interacts with envelope E protein in the budding compartment of the host cell, which is located between endoplasmic reticulum and the Golgi complex. Forms a complex with HE and S proteins. Interacts with nucleocapsid N protein. This interaction probably participates in RNA packaging into the virus.

The protein resides in the virion membrane. Its subcellular location is the host Golgi apparatus membrane. Component of the viral envelope that plays a central role in virus morphogenesis and assembly via its interactions with other viral proteins. The chain is Membrane protein from Porcine hemagglutinating encephalomyelitis virus (strain 67N) (HEV-67N).